Reading from the N-terminus, the 463-residue chain is Cysteine--tRNA ligase (463 aa).

Cysteine 28 contacts Zn(2+). The short motif at 30-40 (VTIYDLCHIGH) is the 'HIGH' region element. Residues cysteine 209, histidine 234, and glutamate 238 each coordinate Zn(2+). The 'KMSKS' region motif lies at 266–270 (KMSKS). ATP is bound at residue lysine 269.

This sequence belongs to the class-I aminoacyl-tRNA synthetase family. In terms of assembly, monomer. Zn(2+) is required as a cofactor.

It is found in the cytoplasm. The enzyme catalyses tRNA(Cys) + L-cysteine + ATP = L-cysteinyl-tRNA(Cys) + AMP + diphosphate. This is Cysteine--tRNA ligase from Tolumonas auensis (strain DSM 9187 / NBRC 110442 / TA 4).